Consider the following 274-residue polypeptide: tRNA-cytidine(32) 2-sulfurtransferase (274 aa).

The PP-loop motif signature appears at 40-45 (SGGKDS). Residues Cys-115, Cys-118, and Cys-206 each coordinate [4Fe-4S] cluster.

It belongs to the TtcA family. In terms of assembly, homodimer. Requires Mg(2+) as cofactor. [4Fe-4S] cluster serves as cofactor.

It is found in the cytoplasm. It carries out the reaction cytidine(32) in tRNA + S-sulfanyl-L-cysteinyl-[cysteine desulfurase] + AH2 + ATP = 2-thiocytidine(32) in tRNA + L-cysteinyl-[cysteine desulfurase] + A + AMP + diphosphate + H(+). It participates in tRNA modification. Catalyzes the ATP-dependent 2-thiolation of cytidine in position 32 of tRNA, to form 2-thiocytidine (s(2)C32). The sulfur atoms are provided by the cysteine/cysteine desulfurase (IscS) system. This chain is tRNA-cytidine(32) 2-sulfurtransferase, found in Pseudomonas putida (strain GB-1).